The following is a 131-amino-acid chain: uncharacterized protein (131 aa).

Positions 1 to 19 (MRESLFIIFFQFVCHSSNS) are cleaved as a signal peptide. 2 consecutive transmembrane segments (helical) span residues 33-53 (PLLT…ALFF) and 111-131 (VSFN…FFLF).

The protein resides in the membrane. This is an uncharacterized protein from Saccharomyces cerevisiae (strain ATCC 204508 / S288c) (Baker's yeast).